Consider the following 331-residue polypeptide: Calcium-binding and coiled-coil domain-containing protein 2 (331 aa).

The short motif at 128–131 (IMVV) is the CLIR element. Residues 132-309 (INKEKVEEME…EKASWEKEKA (178 aa)) are a coiled coil. Residues 189-310 (KASWEKEKAS…KASWEKEKAP (122 aa)) form a disordered region. Residues 190–193 (ASWE) carry the LIR-like motif. The tract at residues 292-302 (KEKASWEEEKA) is interaction with LGALS8.

The protein belongs to the CALCOCO family. As to quaternary structure, dimer. Part of a complex consisting of CALCOCO2, TAX1BP1 and MYO6. Interacts with MYO6. Interacts with GEMIN4. Interacts with ATG8 family members MAP1LC3A, MAP1LC3B, GABARAP, GABARAPL1 and GABARAPL2. Interacts with ATG8 family member MAP1LC3C. Interacts with LGALS8. Interacts with TOM1; the interaction is indirect and is mediated by MYO6, which acts as a bridge between TOM1 and CALCOCO2. Interacts with AZI2.

The protein localises to the cytoplasm. The protein resides in the perinuclear region. Its subcellular location is the cytoskeleton. It is found in the cytoplasmic vesicle. It localises to the autophagosome membrane. Functionally, xenophagy-specific receptor required for autophagy-mediated intracellular bacteria degradation. Acts as an effector protein of galectin-sensed membrane damage that restricts the proliferation of infecting pathogens upon entry into the cytosol by targeting LGALS8-associated bacteria for autophagy. Initially orchestrates bacteria targeting to autophagosomes and subsequently ensures pathogen degradation by regulating pathogen-containing autophagosome maturation. Bacteria targeting to autophagosomes relies on its interaction with MAP1LC3A, MAP1LC3B and/or GABARAPL2, whereas regulation of pathogen-containing autophagosome maturation requires the interaction with MAP3LC3C. May play a role in ruffle formation and actin cytoskeleton organization and seems to negatively regulate constitutive secretion. In Mus musculus (Mouse), this protein is Calcium-binding and coiled-coil domain-containing protein 2.